The following is a 638-amino-acid chain: Bromodomain-containing factor 2 (638 aa).

Over residues 1-10 (MSRTNMDTRH) the composition is skewed to basic and acidic residues. The segment at 1–54 (MSRTNMDTRHAHSALLAAPQSATANSRSSNSSSESSSNKNNINVGVGDDSGNVS) is disordered. Positions 25–43 (NSRSSNSSSESSSNKNNIN) are enriched in low complexity. Positions 130 to 239 (EAEELPPHQS…KYFEKKLSAM (110 aa)) constitute a Bromo 1 domain. The tract at residues 250–306 (KKTSRNRKKNEDMDSPLVIRRSVSTTNDNIGESGNREGVSGGRPKRTIHPPKSKDLF) is disordered. Ser264 is subject to Phosphoserine. A compositionally biased stretch (polar residues) spans 271–281 (SVSTTNDNIGE). The region spanning 317–426 (KTLQKKFRTC…ELFNFHWLEN (110 aa)) is the Bromo 2 domain. A disordered region spans residues 435 to 460 (TDSDLEEDNYSSSYSSDDEYDDEDIN). Positions 450-460 (SDDEYDDEDIN) are enriched in acidic residues. The stretch at 468-537 (AIQYLEQKLK…INELSDLEMN (70 aa)) forms a coiled coil. The NET domain occupies 506–590 (TLLRRKAMKH…EKKNNNNSKR (85 aa)). Residues 586–638 (NNSKRKLSGNYSTAPTNKKKKTLKFLEKDEIINNNNYSDSEEDSSDSSDSDSD) form a disordered region. A compositionally biased stretch (acidic residues) spans 624 to 638 (DSEEDSSDSSDSDSD).

Belongs to the BET family. In terms of assembly, interacts with the TFIID subunit TAF7 and with histone H4. In terms of processing, phosphorylated by the casein kinase CK2 complex.

It localises to the cytoplasm. Its subcellular location is the nucleus. Functionally, transcription factor involved in the expression of a broad class of genes including snRNAs. Required for sporulation and DNA-damage repair. Prevents the spreading of SIR silencing at telomeres and protects histone H4, but not H3, from deacetylation. This chain is Bromodomain-containing factor 2 (BDF2), found in Saccharomyces cerevisiae (strain ATCC 204508 / S288c) (Baker's yeast).